The chain runs to 368 residues: Proline-rich protein 5-like (368 aa).

Residue S28 is modified to Phosphoserine. The tract at residues 327-368 (PSFPPPHRQCSSEPNITDNPDGLEEGARGSQEGSELNCASLS) is disordered. Polar residues-rich tracts occupy residues 335 to 344 (QCSSEPNITD) and 357 to 368 (QEGSELNCASLS).

Belongs to the PROTOR family. Interacts with the mammalian target of rapamycin complex 2 (mTORC2) which contains MTOR, MLST8, PRR5, RICTOR, MAPKAP1 and DEPTOR. Interacts with RFFL. Interacts (via C-terminus) with ZFP36 (via C-terminus); this interaction may accelerate ZFP36-mediated mRNA decay during stress. Interacts with RICTOR. Post-translationally, ubiquitinated. Ubiquitination by RFFL promotes proteasomal degradation of PRR5L thereby modifying the substrate-specific activity of the mTORC2 complex. Ubiquitination by RFFL is stimulated by LPA/lysophosphatidic acid.

Its function is as follows. Associates with the mTORC2 complex that regulates cellular processes including survival and organization of the cytoskeleton. Regulates the activity of the mTORC2 complex in a substrate-specific manner preventing for instance the specific phosphorylation of PKCs and thereby controlling cell migration. Plays a role in the stimulation of ZFP36-mediated mRNA decay of several ZFP36-associated mRNAs, such as TNF-alpha and GM-CSF, in response to stress. Required for ZFP36 localization to cytoplasmic stress granule (SG) and P-body (PB) in response to stress. The protein is Proline-rich protein 5-like (PRR5L) of Homo sapiens (Human).